The sequence spans 423 residues: MNTAAGPTGTAAGGTTAPAAAHDLSRAGRRLQLTRAAQWFAGNQGDPYGMILRAGTADPAPYEEEIRERGPLFHSELLGTWVTGSRHVADAVTADDAFGALTADGARPGVRELPLSGSALDAAHGNPGGPPLPGGWPHRPPDREERDDPDRHAADLLNAAGPGQVLDLVPFARRLAARTTGAWLGVPAERLPRFETALTGCRRALDALLCPQLLADARAGLAAEEALRAVLGETPEARGRPPGAVEAARAHAVSAAEPIAVLLCNAVRELMERPAQWRALTADPGLAGAAITETLLWAPPVRLESRVARETAVLAGRTLPAGTHLVVLAAAANRDACRNAGPAVTGFDVLRRASDGGPQPHGLPEDLHFRLSGPLVRRTAEAGLRALAERFPGLRPAGPAVRVRRSPVLRGLGRLPVAPYVPE.

Low complexity predominate over residues 1 to 21 (MNTAAGPTGTAAGGTTAPAAA). Disordered stretches follow at residues 1-26 (MNTAAGPTGTAAGGTTAPAAAHDLSR) and 117-149 (GSALDAAHGNPGGPPLPGGWPHRPPDREERDDP). Basic and acidic residues predominate over residues 139–149 (RPPDREERDDP).

The protein belongs to the cytochrome P450 family.

It functions in the pathway antibiotic biosynthesis; tylosin biosynthesis. Functionally, involved in the biosynthesis of the macrolide antibiotic tylosin derived from the polyketide lactone tylactone. TylM3 is required for the glycosylation of the 5-hydroxyl group of tylactone to yield 5-O-mycaminosytylactone. In Streptomyces fradiae (Streptomyces roseoflavus), this protein is Protein TylM3.